A 325-amino-acid chain; its full sequence is Leucine-rich repeat protein FLOR 1 (325 aa).

10 LRR repeats span residues Asn65–Asp88, Leu89–Leu114, Lys115–Ser140, Thr142–Met162, Pro163–Ser185, Val187–Tyr211, Phe213–Arg233, Asn234–Phe256, Ala257–Lys280, and Leu281–Thr305.

The protein belongs to the polygalacturonase-inhibiting protein family. As to quaternary structure, interacts with MADS domain transcription factors during flower development. Component of a complex made of FLOR1, VSP1 and AGAMOUS (AG). Binds directly with AG. In terms of tissue distribution, confined to flowers and inflorescences (e.g. inflorescence meristems, floral meristems, stamens and carpels).

The protein resides in the cytoplasm. The protein localises to the nucleus. It is found in the perinuclear region. It localises to the cell membrane. Promotes flowering transition in long days (LD). The chain is Leucine-rich repeat protein FLOR 1 from Arabidopsis thaliana (Mouse-ear cress).